The following is a 330-amino-acid chain: Delta-aminolevulinic acid dehydratase (330 aa).

Residues C122, C124, H131, and C132 each coordinate Zn(2+). Catalysis depends on K199, which acts as the Schiff-base intermediate with substrate. K199 carries the N6-succinyllysine modification. R209 lines the 5-aminolevulinate pocket. Position 215 is a phosphoserine (S215). Position 221 (R221) interacts with 5-aminolevulinate. C223 is a Zn(2+) binding site. K252 functions as the Schiff-base intermediate with substrate in the catalytic mechanism. K252 carries the post-translational modification N6-succinyllysine. The 5-aminolevulinate site is built by S279 and Y318.

The protein belongs to the ALAD family. In terms of assembly, homooctamer; active form. Homohexamer; low activity form. Zn(2+) serves as cofactor.

It is found in the cytoplasm. Its subcellular location is the cytosol. The catalysed reaction is 2 5-aminolevulinate = porphobilinogen + 2 H2O + H(+). Its pathway is porphyrin-containing compound metabolism; protoporphyrin-IX biosynthesis; coproporphyrinogen-III from 5-aminolevulinate: step 1/4. Can alternate between a fully active homooctamer and a low-activity homohexamer. A bound magnesium ion may promote the assembly of the fully active homooctamer. The magnesium-binding site is absent in the low-activity homohexamer. Inhibited by compounds that favor the hexameric state. Inhibited by divalent lead ions. The lead ions partially displace the zinc cofactor. Catalyzes an early step in the biosynthesis of tetrapyrroles. Binds two molecules of 5-aminolevulinate per subunit, each at a distinct site, and catalyzes their condensation to form porphobilinogen. This Mus musculus (Mouse) protein is Delta-aminolevulinic acid dehydratase (Alad).